Reading from the N-terminus, the 242-residue chain is Biosynthetic peptidoglycan transglycosylase (242 aa).

Residues 19–39 (LLLACAVLWGGGVALFSIVPV) traverse the membrane as a helical segment.

Belongs to the glycosyltransferase 51 family.

It is found in the cell inner membrane. The catalysed reaction is [GlcNAc-(1-&gt;4)-Mur2Ac(oyl-L-Ala-gamma-D-Glu-L-Lys-D-Ala-D-Ala)](n)-di-trans,octa-cis-undecaprenyl diphosphate + beta-D-GlcNAc-(1-&gt;4)-Mur2Ac(oyl-L-Ala-gamma-D-Glu-L-Lys-D-Ala-D-Ala)-di-trans,octa-cis-undecaprenyl diphosphate = [GlcNAc-(1-&gt;4)-Mur2Ac(oyl-L-Ala-gamma-D-Glu-L-Lys-D-Ala-D-Ala)](n+1)-di-trans,octa-cis-undecaprenyl diphosphate + di-trans,octa-cis-undecaprenyl diphosphate + H(+). Its pathway is cell wall biogenesis; peptidoglycan biosynthesis. In terms of biological role, peptidoglycan polymerase that catalyzes glycan chain elongation from lipid-linked precursors. This is Biosynthetic peptidoglycan transglycosylase from Klebsiella oxytoca.